Here is a 781-residue protein sequence, read N- to C-terminus: DNA polymerase (781 aa).

It belongs to the DNA polymerase type-B family.

It carries out the reaction DNA(n) + a 2'-deoxyribonucleoside 5'-triphosphate = DNA(n+1) + diphosphate. This chain is DNA polymerase (pol), found in Archaeoglobus fulgidus (strain ATCC 49558 / DSM 4304 / JCM 9628 / NBRC 100126 / VC-16).